The chain runs to 666 residues: Probable cytochrome c oxidase subunit 1 (666 aa).

2 helical membrane-spanning segments follow: residues 16 to 36 (IPLIAGAVVLVAILAVLVWVV) and 57 to 77 (IGVMYILLASIMLLRGGSDAI). Histidine 105 lines the heme b pocket. The next 13 helical transmembrane spans lie at 108 to 128 (IMIFFVAMPFVIGLMNLVVPL), 142 to 162 (SVGFWLTATGALLVNLSLVIG), 192 to 212 (SLQISGVGTLVAGINLVTTVL), 234 to 254 (SNLLIVAAFPILTATLAMLLL), 277 to 297 (LIWAWGHPEVYILVLPAFGIF), 315 to 335 (MVLATMAICVISFMVWLHHFF), 346 to 366 (IFGIASMIIAVPTGVKIYNWL), 380 to 400 (MLWAVGFMVTFIIGGLTGVLV), 413 to 433 (MFLVAHFHNVIIGGVLFGAFA), 456 to 476 (FWFTFLGFYVTFMPLYIAGML), 493 to 513 (WMLVAAAGMAVLTIGVICQIM), 591 to 611 (SPTGFICAFFATIMGFALIWH), and 612 to 632 (IWWMVILGGIGAFATFVVFAW). The Cu cation site is built by histidine 283, tyrosine 287, histidine 332, and histidine 333. Residues 283-287 (HPEVY) constitute a cross-link (1'-histidyl-3'-tyrosine (His-Tyr)). Positions 418 and 420 each coordinate heme b.

The protein belongs to the heme-copper respiratory oxidase family.

It localises to the cell membrane. It carries out the reaction 4 Fe(II)-[cytochrome c] + O2 + 8 H(+)(in) = 4 Fe(III)-[cytochrome c] + 2 H2O + 4 H(+)(out). The protein operates within energy metabolism; oxidative phosphorylation. The polypeptide is Probable cytochrome c oxidase subunit 1 (Bradyrhizobium diazoefficiens (strain JCM 10833 / BCRC 13528 / IAM 13628 / NBRC 14792 / USDA 110)).